The primary structure comprises 193 residues: MIGRIAGILLEKNPPHLLVDCNGVGYEIDVPMSTFYNLPQTGERVVLLTQQIVREDAHLLYGFLTPQERTTFRELLKITGIGARMALAVLSGMSVQELAQAVTMQDAARLTRLPGIGKKTAERLLLELKGKLGADLGALAGAASASDHATDILNALLALGYSEKEGLAAIKNVPAGTGVSEGIKLALKALSKA.

Positions 1–64 are domain I; sequence MIGRIAGILL…EDAHLLYGFL (64 aa). The domain II stretch occupies residues 65 to 139; that stretch reads TPQERTTFRE…GKLGADLGAL (75 aa). The segment at 139 to 143 is flexible linker; the sequence is LAGAA. Residues 144 to 193 are domain III; it reads SASDHATDILNALLALGYSEKEGLAAIKNVPAGTGVSEGIKLALKALSKA.

The protein belongs to the RuvA family. In terms of assembly, homotetramer. Forms an RuvA(8)-RuvB(12)-Holliday junction (HJ) complex. HJ DNA is sandwiched between 2 RuvA tetramers; dsDNA enters through RuvA and exits via RuvB. An RuvB hexamer assembles on each DNA strand where it exits the tetramer. Each RuvB hexamer is contacted by two RuvA subunits (via domain III) on 2 adjacent RuvB subunits; this complex drives branch migration. In the full resolvosome a probable DNA-RuvA(4)-RuvB(12)-RuvC(2) complex forms which resolves the HJ.

Its subcellular location is the cytoplasm. The RuvA-RuvB-RuvC complex processes Holliday junction (HJ) DNA during genetic recombination and DNA repair, while the RuvA-RuvB complex plays an important role in the rescue of blocked DNA replication forks via replication fork reversal (RFR). RuvA specifically binds to HJ cruciform DNA, conferring on it an open structure. The RuvB hexamer acts as an ATP-dependent pump, pulling dsDNA into and through the RuvAB complex. HJ branch migration allows RuvC to scan DNA until it finds its consensus sequence, where it cleaves and resolves the cruciform DNA. In Burkholderia cenocepacia (strain HI2424), this protein is Holliday junction branch migration complex subunit RuvA.